A 362-amino-acid polypeptide reads, in one-letter code: Cobalt-precorrin-5B C(1)-methyltransferase (362 aa).

Belongs to the CbiD family.

It carries out the reaction Co-precorrin-5B + S-adenosyl-L-methionine = Co-precorrin-6A + S-adenosyl-L-homocysteine. The protein operates within cofactor biosynthesis; adenosylcobalamin biosynthesis; cob(II)yrinate a,c-diamide from sirohydrochlorin (anaerobic route): step 6/10. In terms of biological role, catalyzes the methylation of C-1 in cobalt-precorrin-5B to form cobalt-precorrin-6A. The chain is Cobalt-precorrin-5B C(1)-methyltransferase from Burkholderia multivorans (strain ATCC 17616 / 249).